The following is an 802-amino-acid chain: uncharacterized protein (802 aa).

The EF-hand 1 domain occupies 6–41; that stretch reads SRSEKVKRIFQQFDGNLDGGLSREEMSALVVAVNPR. TPR repeat units follow at residues 229–262, 264–296, 305–338, 339–372, 373–406, 407–440, and 442–474; these read FDGHMAIGKVLYEHQLFKEALVSFKRACELQPTD, RPHFKAGNCLYVLGKYKESKDEFLLALEAAESG, PQIYVNLGISLEGEGMVLSACEYYREAAILCPTH, YRALKLLGSALFGVGEYRAAVKALEEAIYLKPDY, ADAHCDLASSLHAMGEDERAIEVFQRAIDLKPGH, VDALYNLGGLYMDLGRFQRASEMYTRVLAVWPNH, and RAQLNKAVSLLGAGETEEAKRALKEALKMTNRV. One can recognise an EF-hand 2 domain in the interval 595 to 630; that stretch reads AIKAINEKILSVLDDSGSGRVDLGMFYAVIAPLCGG.

This is an uncharacterized protein from Arabidopsis thaliana (Mouse-ear cress).